A 101-amino-acid chain; its full sequence is DET1- and DDB1-associated protein 1 (101 aa).

The tract at residues 67–101 is disordered; the sequence is NAAKKRDQDQLEIGETSAPPRKIARTDSQEMSEDT.

It belongs to the DDA1 family. Component of numerous DCX (DDB1-CUL4-X-box) E3 ubiquitin-protein ligase complexes which consist of a core of DDB1, cullin-4 (CUL4A or CUL4B), DDA1 and RBX1.

It functions in the pathway protein modification; protein ubiquitination. Its function is as follows. Functions as a component of numerous distinct DCX (DDB1-CUL4-X-box) E3 ubiquitin-protein ligase complexes which mediate the ubiquitination and subsequent proteasomal degradation of target proteins. In the DCX complexes, acts as a scaffolding subunit required to stabilize the complex. The sequence is that of DET1- and DDB1-associated protein 1 from Xenopus tropicalis (Western clawed frog).